Consider the following 301-residue polypeptide: GTPase Era (301 aa).

The 169-residue stretch at 7–175 folds into the Era-type G domain; the sequence is YCGFIAIVGR…AAIVRKHLPE (169 aa). Residues 15–22 are G1; sequence GRPNVGKS. 15–22 provides a ligand contact to GTP; that stretch reads GRPNVGKS. The tract at residues 41–45 is G2; that stretch reads QTTRH. The tract at residues 62–65 is G3; that stretch reads DTPG. GTP contacts are provided by residues 62–66 and 124–127; these read DTPGL and NKVD. The tract at residues 124-127 is G4; that stretch reads NKVD. Residues 154-156 are G5; that stretch reads ISA. A KH type-2 domain is found at 206–283; sequence LGAELPYSVT…HLELWVKVKS (78 aa).

The protein belongs to the TRAFAC class TrmE-Era-EngA-EngB-Septin-like GTPase superfamily. Era GTPase family. Monomer.

The protein resides in the cytoplasm. The protein localises to the cell inner membrane. In terms of biological role, an essential GTPase that binds both GDP and GTP, with rapid nucleotide exchange. Plays a role in 16S rRNA processing and 30S ribosomal subunit biogenesis and possibly also in cell cycle regulation and energy metabolism. This Escherichia coli O157:H7 protein is GTPase Era.